The sequence spans 259 residues: Protein POLYCHOME (259 aa).

The segment at 236–259 (KMKSTPSAKRAEREKRVRTLMSMR) is disordered.

In terms of assembly, interacts with APC/C activators such as APC5, FZR2, FZR3, CDC20.1 and CDC20.5. In terms of tissue distribution, expressed mainly in actively dividing cells (e.g. central cylinder of the root tip, young leaves and vascular tissues).

The protein resides in the nucleus. Functionally, negative regulator of the anaphase-promoting complex/cyclosome (APC/C) ubiquitin ligase required for proper mitotic progression and cell fate determination; inhibits premature cell differentiation. Prevents DNA endoreplication by promoting the maintenance of the mitotic state by preferentially inhibiting APC/C(FZR) and triggering cyclins accumulation (e.g. CYCB1-1, CYCB1-2 and CYCA2-3) in a temporal manner. Required for megagametophyte and endosperm development. Counteracts the activity of CCS52A1 thus inhibiting the turnover of CYCA2-3. Confers immunity to bacterial pathogens (e.g. Pseudomonas syringae pv. tomato DC3000), which is associated with increased expression of disease resistance (R) genes. This is Protein POLYCHOME (PYM) from Arabidopsis thaliana (Mouse-ear cress).